The sequence spans 742 residues: Zinc finger MYND domain-containing protein 15 (742 aa).

Positions 109–199 (LEDGEEGEEE…QKRKGQRSEA (91 aa)) are disordered. Positions 110 to 127 (EDGEEGEEEEEEDEEEEK) are enriched in acidic residues. Positions 151 to 161 (SRESPQETNPP) are enriched in polar residues. Basic and acidic residues predominate over residues 166–189 (EAAREAGGGKDGCREDRVENETRP). 8 residues coordinate Zn(2+): Cys-313, Cys-316, Cys-328, Cys-331, Cys-337, Cys-341, His-355, and Cys-359. The MYND-type zinc-finger motif lies at 313–359 (CHVCHRHSFEAKLTPCPQCSAVLYCGEACLRADWQRCPDDVSHRFWC). Disordered regions lie at residues 565–590 (EVSV…GRRD) and 701–742 (QGSG…RRRK). A compositionally biased stretch (pro residues) spans 708 to 724 (APGPPPPSPTPSAPPAP). Over residues 725–742 (TRRRRGEKKPGRGARRRK) the composition is skewed to basic residues.

In terms of assembly, interacts with HDAC1, HDAC3, HDAC6 and, to a lesser extent, with HDAC7.

It is found in the nucleus. The protein localises to the cytoplasm. Acts as a transcriptional repressor through interaction with histone deacetylases (HDACs). May be important for spermiogenesis. The protein is Zinc finger MYND domain-containing protein 15 (ZMYND15) of Homo sapiens (Human).